Consider the following 40-residue polypeptide: Hemoglobin subunit alpha-2 (40 aa).

The Globin domain maps to 1–40; the sequence is VGPHLDDYGGEALHRNFEVYPQTKTYFPHFDASAGSNQLK.

It belongs to the globin family. Heterotetramer of two alpha chains and two beta chains. Red blood cells.

Functionally, involved in oxygen transport from the lung to the various peripheral tissues. This is Hemoglobin subunit alpha-2 from Saara hardwickii (Indian spiny-tailed lizard).